The following is a 286-amino-acid chain: Putative ribosome-inactivating protein (286 aa).

The signal sequence occupies residues 1 to 21 (MNRFSVLMCLVILSIFHGVPT). Residues Asn-103 and Asn-110 are each glycosylated (N-linked (GlcNAc...) asparagine). Residue Glu-185 is part of the active site. Asn-252 is a glycosylation site (N-linked (GlcNAc...) asparagine).

This sequence belongs to the ribosome-inactivating protein family. Type 1 RIP subfamily.

The enzyme catalyses Endohydrolysis of the N-glycosidic bond at one specific adenosine on the 28S rRNA.. The polypeptide is Putative ribosome-inactivating protein (Cucumis ficifolius (Cucumis figarei)).